The primary structure comprises 830 residues: MGCLLILLLTLICFSLRLCLATDVITFSSEFRDSETVVSNHSTFRFGFFSPVNSTGRYAGIWFNNIPVQTVVWVANSNSPINDSSGMVSISKEGNLVVMDGRGQVHWSTNVLVPVAANTFYARLLNTGNLVLLGTTNTGDEILWESFEHPQNIYLPTMSLATDTKTGRSLKLRSWKSPFDPSPGRYSAGLIPLPFPELVVWKDDLLMWRSGPWNGQYFIGLPNMDYRINLFELTLSSDNRGSVSMSYAGNTLLYHFLLDSEGSVFQRDWNVAIQEWKTWLKVPSTKCDTYATCGQFASCRFNPGSTPPCMCIRGFKPQSYAEWNNGNWTQGCVRKAPLQCESRDNNDGSRKSDGFVRVQKMKVPHNPQRSGANEQDCPESCLKNCSCTAYSFDRGIGCLLWSGNLMDMQEFSGTGVVFYIRLADSEFKKRTNRSIVITVTLLVGAFLFAGTVVLALWKIAKHREKNRNTRLLNERMEALSSNDVGAILVNQYKLKELPLFEFQVLAVATNNFSITNKLGQGGFGAVYKGRLQEGLDIAVKRLSRTSGQGVEEFVNEVVVISKLQHRNLVRLLGFCIEGEERMLVYEFMPENCLDAYLFDPVKQRLLDWKTRFNIIDGICRGLMYLHRDSRLKIIHRDLKASNILLDENLNPKISDFGLARIFQGNEDEVSTVRVVGTYGYMAPEYAMGGLFSEKSDVFSLGVILLEIVSGRRNSSFYNDGQNPNLSAYAWKLWNTGEDIALVDPVIFEECFENEIRRCVHVGLLCVQDHANDRPSVATVIWMLSSENSNLPEPKQPAFIPRRGTSEVESSGQSDPRASINNVSLTKITGR.

An N-terminal signal peptide occupies residues 1–21 (MGCLLILLLTLICFSLRLCLA). Residues 22 to 145 (TDVITFSSEF…TNTGDEILWE (124 aa)) form the Bulb-type lectin domain. Over 22-434 (TDVITFSSEF…SEFKKRTNRS (413 aa)) the chain is Extracellular. Residues Asn40, Asn53, and Asn82 are each glycosylated (N-linked (GlcNAc...) asparagine). The region spanning 283–321 (PSTKCDTYATCGQFASCRFNPGSTPPCMCIRGFKPQSYA) is the EGF-like; atypical domain. 2 disulfide bridges follow: Cys287–Cys299 and Cys293–Cys309. Asn327, Asn384, and Asn432 each carry an N-linked (GlcNAc...) asparagine glycan. Positions 340-423 (CESRDNNDGS…TGVVFYIRLA (84 aa)) constitute a PAN domain. 2 cysteine pairs are disulfide-bonded: Cys377–Cys398 and Cys381–Cys387. Residues 435–455 (IVITVTLLVGAFLFAGTVVLA) form a helical membrane-spanning segment. The Cytoplasmic segment spans residues 456-830 (LWKIAKHREK…NVSLTKITGR (375 aa)). The region spanning 512–798 (FSITNKLGQG…NLPEPKQPAF (287 aa)) is the Protein kinase domain. ATP-binding positions include 518 to 526 (LGQGGFGAV) and Lys540. Thr545 is modified (phosphothreonine). 2 positions are modified to phosphoserine: Ser546 and Ser561. Positions 601–618 (VKQRLLDWKTRFNIIDGI) are caM-binding. Asp637 (proton acceptor) is an active-site residue. Phosphoserine occurs at positions 641, 654, and 670. Residue Thr671 is modified to Phosphothreonine. A phosphoserine mark is found at Ser714, Ser715, Ser726, Ser805, Ser809, Ser810, Ser813, Ser818, and Ser823. A disordered region spans residues 789 to 830 (NLPEPKQPAFIPRRGTSEVESSGQSDPRASINNVSLTKITGR). Residues 806–830 (EVESSGQSDPRASINNVSLTKITGR) are compositionally biased toward polar residues. 2 positions are modified to phosphothreonine: Thr825 and Thr828.

The protein belongs to the protein kinase superfamily. Ser/Thr protein kinase family. As to quaternary structure, interacts with PUB9, PUB13 and PUB14. Binds to calmodulin (CaM) in a Ca(2+)-dependent manner. In terms of processing, autophosphorylated. Mostly expressed in rosette leaves, and, to a lower extent, in cauline leaves and stems.

It localises to the cell membrane. The enzyme catalyses L-seryl-[protein] + ATP = O-phospho-L-seryl-[protein] + ADP + H(+). It carries out the reaction L-threonyl-[protein] + ATP = O-phospho-L-threonyl-[protein] + ADP + H(+). Receptor-like serine/threonine-protein kinase that represses the disease resistance signaling pathway triggered in response to bacterial pathogen such as Pseudomonas syringae pv. tomato. This is G-type lectin S-receptor-like serine/threonine-protein kinase SD1-13 (SD113) from Arabidopsis thaliana (Mouse-ear cress).